Consider the following 540-residue polypeptide: MALTRPVRLFSLVTRLLLAPRRGLTVRSPDEPLPVVRIPVALQRQLEQRQSRRRNLPRPVLVRPGPLLVSARRPELNQPARLTLGRWERAPLASQGWKSRRARRDHFSIERAQQEAPAVRKLSSKGSFADLGLEPRVLHALQEAAPEVVQPTTVQSSTIPSLLRGRHVVCAAETGSGKTLSYLLPLLQRLLGQPSLDSLPIPAPRGLVLVPSRELAQQVRAVAQPLGRSLGLLVRDLEGGHGMRRIRLQLSRQPSADVLVATPGALWKALKSRLISLEQLSFLVLDEADTLLDESFLELVDYILEKSHIAEGPADLEDPFNPKAQLVLVGATFPEGVGQLLNKVASPDAVTTITSSKLHCIMPHVKQTFLRLKGADKVAELVHILKHRDRAERTGPSGTVLVFCNSSSTVNWLGYILDDHKIQHLRLQGQMPALMRVGIFQSFQKSSRDILLCTDIASRGLDSTGVELVVNYDFPPTLQDYIHRAGRVGRVGSEVPGTVISFVTHPWDVSLVQKIELAARRRRSLPGLASSVKEPLPQAT.

Residues 3-18 carry the Mitochondrial targeting signal motif; that stretch reads LTRPVRLFSLVTRLLL. Residues 126–156 carry the Q motif motif; sequence GSFADLGLEPRVLHALQEAAPEVVQPTTVQS. One can recognise a Helicase ATP-binding domain in the interval 159–351; sequence IPSLLRGRHV…NKVASPDAVT (193 aa). 172 to 179 is an ATP binding site; the sequence is AETGSGKT. The short motif at 180–191 is the Nuclear export signal element; sequence LSYLLPLLQRLL. Positions 286 to 289 match the DEAD motif; sequence DEAD. The Helicase C-terminal domain maps to 377-536; that stretch reads KVAELVHILK…GLASSVKEPL (160 aa). A Nuclear localization signal motif is present at residues 520-523; it reads RRRR.

It belongs to the DEAD box helicase family. As to quaternary structure, monomer. Found in a complex with GRSF1, DHX30, FASTKD2 and FASTKD5. Associates with the 16S mitochondrial rRNA (16S mt-rRNA) and with the mitochondrial ribosome large subunit (39S). Expressed in all tissues tested, including brain, placenta, lung, liver, skeletal muscle, kidney, pancreas, leukocytes, colon, small intestine, ovary and prostate.

It is found in the nucleus. Its subcellular location is the mitochondrion. The protein resides in the mitochondrion matrix. The protein localises to the mitochondrion nucleoid. It carries out the reaction ATP + H2O = ADP + phosphate + H(+). Plays an essential role in facilitating the proper assembly of the mitochondrial large ribosomal subunit and its helicase activity is essential for this function. May be involved in RNA processing or transport. Has RNA and Mg(2+)-dependent ATPase activity. The sequence is that of Probable ATP-dependent RNA helicase DDX28 (DDX28) from Homo sapiens (Human).